Consider the following 367-residue polypeptide: Molybdenum import ATP-binding protein ModC (367 aa).

The 234-residue stretch at 1 to 234 (MSSAALEVRL…PALSGGFGHE (234 aa)) folds into the ABC transporter domain. 33-40 (GPSGAGKS) serves as a coordination point for ATP. Residues 293 to 366 (HISLHNILPV…IKSVAVDVLG (74 aa)) enclose the Mop domain.

Belongs to the ABC transporter superfamily. Molybdate importer (TC 3.A.1.8) family. The complex is composed of two ATP-binding proteins (ModC), two transmembrane proteins (ModB) and a solute-binding protein (ModA).

It is found in the cell inner membrane. The catalysed reaction is molybdate(out) + ATP + H2O = molybdate(in) + ADP + phosphate + H(+). In terms of biological role, part of the ABC transporter complex ModABC involved in molybdenum import. Responsible for energy coupling to the transport system. This is Molybdenum import ATP-binding protein ModC from Granulibacter bethesdensis (strain ATCC BAA-1260 / CGDNIH1).